Consider the following 78-residue polypeptide: Beta-defensin 135 (78 aa).

The signal sequence occupies residues 1–24; the sequence is MATRSVLLALVVLNLLFYVPPGRS. 2 cysteine pairs are disulfide-bonded: Cys37/Cys64 and Cys48/Cys66.

This sequence belongs to the beta-defensin family.

The protein resides in the secreted. In terms of biological role, has antibacterial activity. The polypeptide is Beta-defensin 135 (DEFB135) (Pan troglodytes (Chimpanzee)).